Reading from the N-terminus, the 227-residue chain is Eukaryotic translation initiation factor 4E-1 (227 aa).

The interval 1–52 (MAEEHETRPPSAGRPPSSGRGRADDADEREEGEIADDDSGHAPPQANPAAPH) is disordered. Positions 9–20 (PPSAGRPPSSGR) are enriched in low complexity. Acidic residues predominate over residues 25 to 37 (DADEREEGEIADD). EIF4G-binding regions lie at residues 52 to 55 (HPLE) and 62 to 98 (FDNP…NNIH). Residues 70-75 (KQATWG), lysine 102, and 120-121 (WE) each bind mRNA. Cysteine 125 and cysteine 163 are disulfide-bonded. The tract at residues 146–155 (HTLLAMIGEQ) is EIF4G-binding. Residues 170–175 (RGKQER) and 215–219 (KKMDK) each bind mRNA.

It belongs to the eukaryotic initiation factor 4E family. EIF4F is a multi-subunit complex, the composition of which varies with external and internal environmental conditions. It is composed of at least EIF4A, EIF4E and EIF4G. EIF4E is also known to interact with other partners. In higher plants two isoforms of EIF4F have been identified, named isoform EIF4F and isoform EIF(iso)4F. Isoform EIF4F has subunits p220 and p26, whereas isoform EIF(iso)4F has subunits p82 and p28. Post-translationally, according to the redox status, the Cys-125-Cys-163 disulfide bridge may have a role in regulating protein function by affecting its ability to bind capped mRNA.

It localises to the nucleus. It is found in the cytoplasm. In terms of biological role, component of the protein complex eIF4F, which is involved in the recognition of the mRNA cap, ATP-dependent unwinding of 5'-terminal secondary structure and recruitment of mRNA to the ribosome. Recognizes and binds the 7-methylguanosine-containing mRNA cap during an early step in the initiation of protein synthesis and facilitates ribosome binding by inducing the unwinding of the mRNAs secondary structures. The protein is Eukaryotic translation initiation factor 4E-1 of Oryza sativa subsp. japonica (Rice).